We begin with the raw amino-acid sequence, 193 residues long: 3-isopropylmalate dehydratase small subunit (193 aa).

Belongs to the LeuD family. LeuD type 1 subfamily. Heterodimer of LeuC and LeuD.

It catalyses the reaction (2R,3S)-3-isopropylmalate = (2S)-2-isopropylmalate. It participates in amino-acid biosynthesis; L-leucine biosynthesis; L-leucine from 3-methyl-2-oxobutanoate: step 2/4. Functionally, catalyzes the isomerization between 2-isopropylmalate and 3-isopropylmalate, via the formation of 2-isopropylmaleate. This is 3-isopropylmalate dehydratase small subunit from Bacillus cereus (strain 03BB102).